The primary structure comprises 649 residues: Extracellular metalloproteinase 4 (649 aa).

The N-terminal stretch at 1–18 (MHGLLLAGLLALPSNVLG) is a signal peptide. Residues 19 to 260 (HPAEPPNSVN…VHGVVDYVAS (242 aa)) constitute a propeptide that is removed on maturation. His-443 provides a ligand contact to Zn(2+). Glu-444 is an active-site residue. A Zn(2+)-binding site is contributed by His-447. N-linked (GlcNAc...) asparagine glycosylation is found at Asn-494 and Asn-609.

This sequence belongs to the peptidase M36 family. The cofactor is Zn(2+).

Its subcellular location is the secreted. In terms of biological role, secreted metalloproteinase probably acting as a virulence factor. The sequence is that of Extracellular metalloproteinase 4 (MEP4) from Arthroderma otae (strain ATCC MYA-4605 / CBS 113480) (Microsporum canis).